A 451-amino-acid chain; its full sequence is Subtilase-type proteinase psp3 (451 aa).

The N-terminal stretch at 1 to 20 (MRVSWISGLLLVAHLAPSSA) is a signal peptide. Residues 80 to 161 (YIVMFKPSVD…LVEPDRVMHV (82 aa)) enclose the Inhibitor I9 domain. Positions 169 to 451 (PWGLARVSHR…PNVLAFNNYE (283 aa)) constitute a Peptidase S8 domain. Residues D205, H237, and S394 each act as charge relay system in the active site.

This sequence belongs to the peptidase S8 family.

The chain is Subtilase-type proteinase psp3 (psp3) from Schizosaccharomyces pombe (strain 972 / ATCC 24843) (Fission yeast).